The following is a 215-amino-acid chain: Orotate phosphoribosyltransferase (215 aa).

Residue lysine 26 coordinates 5-phospho-alpha-D-ribose 1-diphosphate. 34–35 (FF) serves as a coordination point for orotate. Residues 72–73 (YK), arginine 99, lysine 100, lysine 103, histidine 105, and 124–132 (DDVITAGTA) contribute to the 5-phospho-alpha-D-ribose 1-diphosphate site. Orotate contacts are provided by threonine 128 and arginine 156.

This sequence belongs to the purine/pyrimidine phosphoribosyltransferase family. PyrE subfamily. Homodimer. The cofactor is Mg(2+).

The catalysed reaction is orotidine 5'-phosphate + diphosphate = orotate + 5-phospho-alpha-D-ribose 1-diphosphate. Its pathway is pyrimidine metabolism; UMP biosynthesis via de novo pathway; UMP from orotate: step 1/2. In terms of biological role, catalyzes the transfer of a ribosyl phosphate group from 5-phosphoribose 1-diphosphate to orotate, leading to the formation of orotidine monophosphate (OMP). The polypeptide is Orotate phosphoribosyltransferase (Hahella chejuensis (strain KCTC 2396)).